Reading from the N-terminus, the 650-residue chain is Serine/threonine-protein kinase oca2 (650 aa).

Positions 1–14 (MSVTPPNVQFNLNG) are enriched in polar residues. 2 disordered regions span residues 1-210 (MSVT…PHDI) and 222-288 (HHGK…KSSA). Serine 72 carries the post-translational modification Phosphoserine. The span at 78–98 (NHIDPKLAEDRYRSSAARHFE) shows a compositional bias: basic and acidic residues. Over residues 140 to 154 (PSGSTGYTSPALSQN) the composition is skewed to polar residues. 2 stretches are compositionally biased toward basic residues: residues 222 to 231 (HHGKHGHHGH) and 245 to 257 (HDKH…HEKH). Over residues 258–279 (HSSLDLRRFFKSHQKTDKEKKP) the composition is skewed to basic and acidic residues. Residue serine 286 is modified to Phosphoserine. In terms of domain architecture, Protein kinase spans 302-614 (GKFGRMLGSG…IHRVFADNWI (313 aa)). Residues 308-316 (LGSGAGGSV) and lysine 331 contribute to the ATP site. The Proton acceptor role is filled by aspartate 425. The interval 549–570 (PIRKTDESHSPNSKTDNSSTHK) is disordered.

This sequence belongs to the protein kinase superfamily. Ser/Thr protein kinase family.

Its subcellular location is the cytoplasm. The enzyme catalyses L-seryl-[protein] + ATP = O-phospho-L-seryl-[protein] + ADP + H(+). It catalyses the reaction L-threonyl-[protein] + ATP = O-phospho-L-threonyl-[protein] + ADP + H(+). Its function is as follows. Overexpression causes cell cycle arrest. This chain is Serine/threonine-protein kinase oca2, found in Schizosaccharomyces pombe (strain 972 / ATCC 24843) (Fission yeast).